The primary structure comprises 361 residues: D-alanine--D-alanine ligase (361 aa).

The region spanning 134–344 (KLLLKSFNIP…FKDLIDNLID (211 aa)) is the ATP-grasp domain. Residue 167–222 (KEVLGYPVIVKPAVLGSSIGINVAYSENQIESCIEEALKYDLTIVIEKFIEAREIE) participates in ATP binding. 3 residues coordinate Mg(2+): Asp-297, Glu-311, and Asn-313.

This sequence belongs to the D-alanine--D-alanine ligase family. Mg(2+) is required as a cofactor. The cofactor is Mn(2+).

Its subcellular location is the cytoplasm. It catalyses the reaction 2 D-alanine + ATP = D-alanyl-D-alanine + ADP + phosphate + H(+). It participates in cell wall biogenesis; peptidoglycan biosynthesis. Its function is as follows. Cell wall formation. The protein is D-alanine--D-alanine ligase of Borreliella afzelii (strain PKo) (Borrelia afzelii).